The chain runs to 220 residues: 7-carboxy-7-deazaguanine synthase (220 aa).

Substrate contacts are provided by residues 16–18 (IQG) and Arg31. Residues 22–215 (FAGWPCAFVR…LQLHKYIWNP (194 aa)) enclose the Radical SAM core domain. The [4Fe-4S] cluster site is built by Cys35, Cys39, and Cys42. Thr44 contributes to the Mg(2+) binding site. Thr74 lines the substrate pocket. S-adenosyl-L-methionine is bound at residue Gly76.

The protein belongs to the radical SAM superfamily. 7-carboxy-7-deazaguanine synthase family. As to quaternary structure, homodimer. [4Fe-4S] cluster serves as cofactor. Requires S-adenosyl-L-methionine as cofactor. It depends on Mg(2+) as a cofactor.

The catalysed reaction is 6-carboxy-5,6,7,8-tetrahydropterin + H(+) = 7-carboxy-7-deazaguanine + NH4(+). Its pathway is purine metabolism; 7-cyano-7-deazaguanine biosynthesis. Catalyzes the complex heterocyclic radical-mediated conversion of 6-carboxy-5,6,7,8-tetrahydropterin (CPH4) to 7-carboxy-7-deazaguanine (CDG), a step common to the biosynthetic pathways of all 7-deazapurine-containing compounds. This Chlorobaculum tepidum (strain ATCC 49652 / DSM 12025 / NBRC 103806 / TLS) (Chlorobium tepidum) protein is 7-carboxy-7-deazaguanine synthase.